A 430-amino-acid chain; its full sequence is Glutamate-1-semialdehyde 2,1-aminomutase (430 aa).

N6-(pyridoxal phosphate)lysine is present on lysine 268.

Belongs to the class-III pyridoxal-phosphate-dependent aminotransferase family. HemL subfamily. The cofactor is pyridoxal 5'-phosphate.

It localises to the cytoplasm. It carries out the reaction (S)-4-amino-5-oxopentanoate = 5-aminolevulinate. Its pathway is porphyrin-containing compound metabolism; protoporphyrin-IX biosynthesis; 5-aminolevulinate from L-glutamyl-tRNA(Glu): step 2/2. In Methanopyrus kandleri (strain AV19 / DSM 6324 / JCM 9639 / NBRC 100938), this protein is Glutamate-1-semialdehyde 2,1-aminomutase.